We begin with the raw amino-acid sequence, 72 residues long: Mitochondrial import receptor subunit TOM7-1 (72 aa).

The Cytoplasmic portion of the chain corresponds to Leu2–Lys41. The chain crosses the membrane as a helical span at residues Val42–Ser59. Topologically, residues Glu60–Val72 are mitochondrial intermembrane.

The protein belongs to the Tom7 family. Forms part of the preprotein translocase complex of the outer mitochondrial membrane (TOM complex).

It localises to the mitochondrion outer membrane. Seems to act as a modulator of the dynamics of the mitochondrial protein transport machinery. Seems to promote the dissociation of subunits of the outer membrane translocase. The chain is Mitochondrial import receptor subunit TOM7-1 (TOM7-1) from Solanum tuberosum (Potato).